A 189-amino-acid polypeptide reads, in one-letter code: Chitin synthase 1 (189 aa).

It belongs to the chitin synthase family. Class I subfamily.

The protein resides in the cell membrane. It carries out the reaction [(1-&gt;4)-N-acetyl-beta-D-glucosaminyl](n) + UDP-N-acetyl-alpha-D-glucosamine = [(1-&gt;4)-N-acetyl-beta-D-glucosaminyl](n+1) + UDP + H(+). Functionally, polymerizes chitin, a structural polymer of the cell wall and septum, by transferring the sugar moiety of UDP-GlcNAc to the non-reducing end of the growing chitin polymer. This is Chitin synthase 1 (CHS1) from Exophiala jeanselmei (Dematiaceous fungus).